The primary structure comprises 331 residues: 4-hydroxythreonine-4-phosphate dehydrogenase (331 aa).

2 residues coordinate substrate: H137 and T138. H167, H212, and H267 together coordinate a divalent metal cation. Substrate-binding residues include K275, N284, and R293.

It belongs to the PdxA family. In terms of assembly, homodimer. Zn(2+) is required as a cofactor. It depends on Mg(2+) as a cofactor. The cofactor is Co(2+).

The protein localises to the cytoplasm. It carries out the reaction 4-(phosphooxy)-L-threonine + NAD(+) = 3-amino-2-oxopropyl phosphate + CO2 + NADH. It functions in the pathway cofactor biosynthesis; pyridoxine 5'-phosphate biosynthesis; pyridoxine 5'-phosphate from D-erythrose 4-phosphate: step 4/5. Catalyzes the NAD(P)-dependent oxidation of 4-(phosphooxy)-L-threonine (HTP) into 2-amino-3-oxo-4-(phosphooxy)butyric acid which spontaneously decarboxylates to form 3-amino-2-oxopropyl phosphate (AHAP). The protein is 4-hydroxythreonine-4-phosphate dehydrogenase of Yersinia pestis bv. Antiqua (strain Angola).